The primary structure comprises 226 residues: Protein YAE1 homolog (226 aa).

Residues 45 to 85 (GYRDGIDAGKAVTLQQGFNQGYKKGAEVILNYGRLRGTLSA) form a deca-GX3 motif; required for interaction with LTO1 region.

Forms a complex with LTO1.

It localises to the cytoplasm. Its subcellular location is the nucleus. Its function is as follows. The complex LTO1:YAE1 functions as a target specific adapter that probably recruits apo-ABCE1 to the cytosolic iron-sulfur protein assembly (CIA) complex machinery. May be required for biogenesis of the large ribosomal subunit and initiation of translation. The polypeptide is Protein YAE1 homolog (Homo sapiens (Human)).